Consider the following 156-residue polypeptide: Endogenous retrovirus group K member 113 Pro protein (156 aa).

Residues 21–96 (FEGLVDTGAD…IPLNLWGRDL (76 aa)) form the Peptidase A2 domain. Residue Asp-26 is part of the active site. A G-patch domain is found at 111 to 156 (YSPTSQKIMTKMGYIPGKGLGKNEDGIKIPVEAKINQKREGIGYPF).

The protein belongs to the peptidase A2 family. HERV class-II K(HML-2) subfamily. As to quaternary structure, active as a homodimer. Post-translationally, autoproteolytically processed at the N-terminus. Expected C-terminal autoprocessing not detected. The sequence shown is that of the processed Pro protein.

The enzyme catalyses Processing at the authentic HIV-1 PR recognition site and release of the mature p17 matrix and the p24 capsid protein, as a result of the cleavage of the -SQNY-|-PIVQ- cleavage site.. Functionally, retroviral proteases have roles in the processing of the primary translation products and the maturation of the viral particle. Endogenous Pro proteins may have kept, lost or modified their original function during evolution. This Homo sapiens (Human) protein is Endogenous retrovirus group K member 113 Pro protein (HERVK_113).